A 302-amino-acid chain; its full sequence is Phospho-N-acetylmuramoyl-pentapeptide-transferase (302 aa).

The next 9 membrane-spanning stretches (helical) occupy residues 1–21 (MIAA…KLFR), 42–62 (GTPT…GMIS), 68–88 (VLLG…LSVV), 123–143 (FFGF…LVIV), 154–174 (GLDG…WFFL), 178–198 (GVSE…LVFN), 204–224 (IFMG…VSVL), 229–249 (FYLV…ILQV), and 279–299 (IVAV…EIFG).

This sequence belongs to the glycosyltransferase 4 family. MraY subfamily. Requires Mg(2+) as cofactor.

Its subcellular location is the cell inner membrane. The catalysed reaction is UDP-N-acetyl-alpha-D-muramoyl-L-alanyl-gamma-D-glutamyl-meso-2,6-diaminopimeloyl-D-alanyl-D-alanine + di-trans,octa-cis-undecaprenyl phosphate = di-trans,octa-cis-undecaprenyl diphospho-N-acetyl-alpha-D-muramoyl-L-alanyl-D-glutamyl-meso-2,6-diaminopimeloyl-D-alanyl-D-alanine + UMP. It participates in cell wall biogenesis; peptidoglycan biosynthesis. Its function is as follows. Catalyzes the initial step of the lipid cycle reactions in the biosynthesis of the cell wall peptidoglycan: transfers peptidoglycan precursor phospho-MurNAc-pentapeptide from UDP-MurNAc-pentapeptide onto the lipid carrier undecaprenyl phosphate, yielding undecaprenyl-pyrophosphoryl-MurNAc-pentapeptide, known as lipid I. This is Phospho-N-acetylmuramoyl-pentapeptide-transferase from Thermotoga petrophila (strain ATCC BAA-488 / DSM 13995 / JCM 10881 / RKU-1).